A 203-amino-acid chain; its full sequence is Putative 3-methyladenine DNA glycosylase (203 aa).

Belongs to the DNA glycosylase MPG family.

This is Putative 3-methyladenine DNA glycosylase from Clostridium botulinum (strain Loch Maree / Type A3).